Here is a 392-residue protein sequence, read N- to C-terminus: Large ribosomal subunit protein uL3 (392 aa).

It belongs to the universal ribosomal protein uL3 family. Component of the large ribosomal subunit (LSU). Mature N.crassa ribosomes consist of a small (40S) and a large (60S) subunit. The 40S small subunit contains 1 molecule of ribosomal RNA (18S rRNA) and at least 32 different proteins. The large 60S subunit contains 3 rRNA molecules (26S, 5.8S and 5S rRNA) and at least 42 different proteins.

The protein localises to the cytoplasm. In terms of biological role, component of the ribosome, a large ribonucleoprotein complex responsible for the synthesis of proteins in the cell. The small ribosomal subunit (SSU) binds messenger RNAs (mRNAs) and translates the encoded message by selecting cognate aminoacyl-transfer RNA (tRNA) molecules. The large subunit (LSU) contains the ribosomal catalytic site termed the peptidyl transferase center (PTC), which catalyzes the formation of peptide bonds, thereby polymerizing the amino acids delivered by tRNAs into a polypeptide chain. The nascent polypeptides leave the ribosome through a tunnel in the LSU and interact with protein factors that function in enzymatic processing, targeting, and the membrane insertion of nascent chains at the exit of the ribosomal tunnel. The sequence is that of Large ribosomal subunit protein uL3 (rpl-3) from Neurospora crassa (strain ATCC 24698 / 74-OR23-1A / CBS 708.71 / DSM 1257 / FGSC 987).